The following is a 335-amino-acid chain: tRNA N6-adenosine threonylcarbamoyltransferase (335 aa).

His109, His113, and Tyr130 together coordinate a divalent metal cation. Substrate contacts are provided by residues 130–134 (YVSGG), Asp162, Gly177, Glu181, and Asn266. Residue Asp294 coordinates a divalent metal cation.

Belongs to the KAE1 / TsaD family. As to quaternary structure, component of the EKC/KEOPS complex composed of at least GON7, TP53RK, TPRKB, OSGEP and LAGE3; the whole complex dimerizes. A divalent metal cation serves as cofactor. Widely expressed at low level. Expressed at intermediate level in lung. Weakly expressed in testis, skeletal muscle, kidney, liver, spleen, brain and heart.

It is found in the cytoplasm. The protein localises to the nucleus. It carries out the reaction L-threonylcarbamoyladenylate + adenosine(37) in tRNA = N(6)-L-threonylcarbamoyladenosine(37) in tRNA + AMP + H(+). Component of the EKC/KEOPS complex that is required for the formation of a threonylcarbamoyl group on adenosine at position 37 (t(6)A37) in tRNAs that read codons beginning with adenine. The complex is probably involved in the transfer of the threonylcarbamoyl moiety of threonylcarbamoyl-AMP (TC-AMP) to the N6 group of A37. OSGEP likely plays a direct catalytic role in this reaction, but requires other protein(s) of the complex to fulfill this activity. The sequence is that of tRNA N6-adenosine threonylcarbamoyltransferase (Osgep) from Mus musculus (Mouse).